We begin with the raw amino-acid sequence, 424 residues long: Transcription regulator spe-44 (424 aa).

An SAND domain is found at 65 to 150; sequence PLQITIPEGD…RTHMEAMTID (86 aa). Disordered stretches follow at residues 178 to 228 and 371 to 394; these read ARKS…KPRQ and EHSVKYQPRTSSSSQESLHTAREF. The segment covering 192–210 has biased composition (basic and acidic residues); that stretch reads YEIENEMAGKEADNDDNRK. A compositionally biased stretch (polar residues) spans 378–388; sequence PRTSSSSQESL.

The protein localises to the chromosome. Its subcellular location is the nucleus. In terms of biological role, transcription factor which controls spermatogenesis and sperm cell fate by regulation of sperm gene expression. The protein is Transcription regulator spe-44 of Caenorhabditis elegans.